The sequence spans 257 residues: tRNA pseudouridine synthase A (257 aa).

Asp43 acts as the Nucleophile in catalysis. Residue Tyr94 coordinates substrate.

It belongs to the tRNA pseudouridine synthase TruA family.

It catalyses the reaction uridine(38/39/40) in tRNA = pseudouridine(38/39/40) in tRNA. Its function is as follows. Formation of pseudouridine at positions 38, 39 and 40 in the anticodon stem and loop of transfer RNAs. This chain is tRNA pseudouridine synthase A, found in Pyrobaculum calidifontis (strain DSM 21063 / JCM 11548 / VA1).